The primary structure comprises 405 residues: MVLAAPLLLGFLLLALELRPRGEAAEGPAAAAAAAAAAAGVGGERSSRPAPSAAPEPDGCPVCVWRQHSRELRLESIKSQILSKLRLKEAPNISREVVKQLLPKAPPLQQILDLHDFQGDALQPEDFLEEDEYHATTETVISMAQETDPAVQTDGSPLCCHFHFSPKVMFTKVLKAQLWVYLRPVPRPATVYLQILRLKPLTGEGTAGGGGGGRRHIRIRSLKIELHSRSGHWQSIDFKQVLHSWFRQPQSNWGIEINAFDPSGTDLAVTSLGPGAEGLHPFMELRVLENTKRSRRNLGLDCDEHSSESRCCRYPLTVDFEAFGWDWIIAPKRYKANYCSGQCEYMFMQKYPHTHLVQQANPRGSAGPCCTPTKMSPINMLYFNDKQQIIYGKIPGMVVDRCGCS.

A signal peptide spans 1 to 24 (MVLAAPLLLGFLLLALELRPRGEA). A propeptide spanning residues 25–296 (AEGPAAAAAA…VLENTKRSRR (272 aa)) is cleaved from the precursor. An N-linked (GlcNAc...) asparagine glycan is attached at N92. 4 cysteine pairs are disulfide-bonded: C302/C312, C311/C370, C339/C402, and C343/C404.

The protein belongs to the TGF-beta family. As to quaternary structure, homodimer; disulfide-linked. Interacts directly with ACVR2B. Interacts directly with ACVR2A. Interacts with ACVR1B, TGFBR1 and ACVR1C in an ACVR2B-dependent manner. Interacts with FST isoform 2/FS288. Synthesized as large precursor molecule that undergoes proteolytic cleavage by furin-like proteases. This produces an inactive form consisting of the mature C-terminal portion non-covalently bound to its cleaved N-terminal propeptide. Activation of the mature form requires additional cleavage of the propeptide by a tolloid-like metalloproteinase.

Its subcellular location is the secreted. In terms of biological role, secreted signal that acts globally to regulate anterior/posterior axial patterning during development. May play critical roles in patterning both mesodermal and neural tissues. It is required for proper vertebral patterning and orofacial development. Signals through activin receptors type-2, ACVR2A and ACVR2B, and activin receptors type-1, ACVR1B, ACVR1C and TGFBR1 leading to the phosphorylation of SMAD2 and SMAD3. In Rattus norvegicus (Rat), this protein is Growth/differentiation factor 11 (Gdf11).